Reading from the N-terminus, the 249-residue chain is Tumor necrosis factor ligand superfamily member 12 (249 aa).

Residues 1-21 (MAARRSQRRRGRRGEPGTALL) are Cytoplasmic-facing. Residues 22–42 (VPLALGLGLALACLGLLLAVV) traverse the membrane as a helical; Signal-anchor for type II membrane protein segment. At 43–249 (SLGSRASLSA…LTYFGLFQVH (207 aa)) the chain is on the extracellular side. The tract at residues 55–85 (PAQEELVAEEDQDPSELNPQTEESQDPAPFL) is disordered. Residues 56-68 (AQEELVAEEDQDP) are compositionally biased toward acidic residues. The 142-residue stretch at 107 to 248 (IAAHYEVHPR…FLTYFGLFQV (142 aa)) folds into the THD domain. Residue N139 is glycosylated (N-linked (GlcNAc...) asparagine). Cysteines 191 and 210 form a disulfide.

Belongs to the tumor necrosis factor family. As to quaternary structure, homotrimer. Interacts with the angiogenic factor AGGF1/VG5Q. In terms of processing, the soluble form derives from the membrane form by proteolytic processing. Highly expressed in adult heart, pancreas, skeletal muscle, brain, colon, small intestine, lung, ovary, prostate, spleen, lymph node, appendix and peripheral blood lymphocytes. Low expression in kidney, testis, liver, placenta, thymus and bone marrow. Also detected in fetal kidney, liver, lung and brain.

The protein localises to the cell membrane. It is found in the secreted. Its function is as follows. Binds to FN14 and possibly also to TNRFSF12/APO3. Weak inducer of apoptosis in some cell types. Mediates NF-kappa-B activation. Promotes angiogenesis and the proliferation of endothelial cells. Also involved in induction of inflammatory cytokines. Promotes IL8 secretion. This Homo sapiens (Human) protein is Tumor necrosis factor ligand superfamily member 12 (TNFSF12).